The primary structure comprises 1290 residues: MAGAASPCANGCGPGAPSDAEVLHLCRSLEVGTVMTLFYSKKSQRPERKTFQVKLETRQITWSRGADKIEGAIDIREIKEIRPGKTSRDFDRYQEDPAFRPDQSHCFVILYGMEFRLKTLSLQATSEDEVNMWIKGLTWLMEDTLQAPTPLQIERWLRKQFYSVDRNREDRISAKDLKNMLSQVNYRVPNMRFLRERLTDLEQRSGDITYGQFAQLYRSLMYSAQKTMDLPFLEASTLRAGERPELCRVSLPEFQQFLLDYQGELWAVDRLQVQEFMLSFLRDPLREIEEPYFFLDEFVTFLFSKENSVWNSQLDAVCPDTMNNPLSHYWISSSHNTYLTGDQFSSESSLEAYARCLRMGCRCIELDCWDGPDGMPVIYHGHTLTTKIKFSDVLHTIKEHAFVASEYPVILSIEDHCSIAQQRNMAQYFKKVLGDTLLTKPVEISADGLPSPNQLKRKILIKHKKLAEGSAYEEVPTSMMYSENDISNSIKNGILYLEDPVNHEWYPHYFVLTSSKIYYSEETSSDQGNEDEEEPKEVSSSTELHSNEKWFHGKLGAGRDGRHIAERLLTEYCIETGAPDGSFLVRESETFVGDYTLSFWRNGKVQHCRIHSRQDAGTPKFFLTDNLVFDSLYDLITHYQQVPLRCNEFEMRLSEPVPQTNAHESKEWYHASLTRAQAEHMLMRVPRDGAFLVRKRNEPNSYAISFRAEGKIKHCRVQQEGQTVMLGNSEFDSLVDLISYYEKHPLYRKMKLRYPINEEALEKIGTAEPDYGALYEGRNPGFYVEANPMPTFKCAVKALFDYKAQREDELTFIKSAIIQNVEKQEGGWWRGDYGGKKQLWFPSNYVEEMVNPVALEPEREHLDENSPLGDLLRGVLDVPACQIAIRPEGKNNRLFVFSISMASVAHWSLDVAADSQEELQDWVKKIREVAQTADARLTEGKIMERRKKIALELSELVVYCRPVPFDEEKIGTERACYRDMSSFPETKAEKYVNKAKGKKFLQYNRLQLSRIYPKGQRLDSSNYDPLPMWICGSQLVALNFQTPDKPMQMNQALFMTGRHCGYVLQPSTMRDEAFDPFDKSSLRGLEPCAISIEVLGARHLPKNGRGIVCPFVEIEVAGAEYDSTKQKTEFVVDNGLNPVWPAKPFHFQISNPEFAFLRFVVYEEDMFSDQNFLAQATFPVKGLKTGYRAVPLKNNYSEDLELASLLIKIDIFPAKENGDLSPFSGTSLRERGSDASGQLFHGRAREGSFESRYQQPFEDFRISQEHLADHFDSRERRAPRRTRVNGDNRL.

Position 2 is an N-acetylalanine (alanine 2). In terms of domain architecture, PH 1 spans 27–142 (RSLEVGTVMT…WIKGLTWLME (116 aa)). Residues 152-187 (QIERWLRKQFYSVDRNREDRISAKDLKNMLSQVNYR) enclose the EF-hand domain. Ca(2+) contacts are provided by aspartate 165, asparagine 167, glutamate 169, arginine 171, and aspartate 176. The region spanning 320-464 (DTMNNPLSHY…LKRKILIKHK (145 aa)) is the PI-PLC X-box domain. Active-site residues include histidine 335 and histidine 380. A PH 2; first part domain is found at 489 to 523 (SIKNGILYLEDPVNHEWYPHYFVLTSSKIYYSEET). Tyrosine 506 bears the Phosphotyrosine mark. A disordered region spans residues 522–544 (ETSSDQGNEDEEEPKEVSSSTEL). 2 consecutive SH2 domains span residues 550–657 (WFHG…SEPV) and 668–756 (WYHA…RYPI). Tyrosine 771 bears the Phosphotyrosine; by SYK mark. Phosphotyrosine is present on tyrosine 775. Residue tyrosine 783 is modified to Phosphotyrosine; by ITK, SYK and TXK. The region spanning 791–851 (TFKCAVKALF…PSNYVEEMVN (61 aa)) is the SH3 domain. The PH 2; second part domain occupies 895–931 (FVFSISMASVAHWSLDVAADSQEELQDWVKKIREVAQ). The region spanning 953–1070 (LSELVVYCRP…GYVLQPSTMR (118 aa)) is the PI-PLC Y-box domain. At tyrosine 977 the chain carries Phosphotyrosine. One can recognise a C2 domain in the interval 1071-1194 (DEAFDPFDKS…TGYRAVPLKN (124 aa)). Residues serine 1221, proline 1222, serine 1227, serine 1233, and serine 1248 each carry the phosphoserine modification. Tyrosine 1253 is modified (phosphotyrosine). A Phosphoserine modification is found at serine 1263. The tract at residues 1271 to 1290 (FDSRERRAPRRTRVNGDNRL) is disordered.

In terms of assembly, interacts with AGAP2 via its SH3 domain. Interacts (via SH2 domain) with RET. Interacts with FLT1 (tyrosine-phosphorylated). Interacts (via SH2 domain) with FGFR1, FGFR2, FGFR3 and FGFR4 (phosphorylated). Interacts with LAT (phosphorylated) upon TCR activation. Interacts (via SH3 domain) with the Pro-rich domain of TNK1. Associates with BLNK, VAV1, GRB2 and NCK1 in a B-cell antigen receptor-dependent fashion. Interacts with CBLB in activated T-cells; which inhibits phosphorylation. Interacts with SHB. Interacts (via SH3 domain) with the Arg/Gly-rich-flanked Pro-rich domains of KHDRBS1/SAM68. This interaction is selectively regulated by arginine methylation of KHDRBS1/SAM68. Interacts with INPP5D/SHIP1, THEMIS and CLNK. Interacts with AXL, FLT4 and KIT. Interacts with RALGPS1. Interacts (via the SH2 domains) with VIL1 (phosphorylated at C-terminus tyrosine phosphorylation sites). Interacts (via SH2 domain) with PDGFRA and PDGFRB (tyrosine phosphorylated). Interacts with PIP5K1C. Interacts with NTRK1 and NTRK2 (phosphorylated upon ligand-binding). Interacts with SYK; activates PLCG1. Interacts with GRB2, LAT and THEMIS upon TCR activation in thymocytes. Interacts with TESPA1; the association is increased with prolonged stimulation of the TCR and may facilitate the assembly of the LAT signalosome. Interacts (via C-terminal proline-rich domain (PRD)) with PLCG1 (via SH3 domain); this interaction leads to guanine nucleotide exchange from PlCG1 to DNM1 and enhances DNM1-dependent endocytosis. As to quaternary structure, (Microbial infection) Interacts (via SH3 domain) with HEV ORF3 protein. Requires Ca(2+) as cofactor. In terms of processing, tyrosine phosphorylated in response to signaling via activated FLT3, KIT and PDGFRA. Tyrosine phosphorylated by activated FGFR1, FGFR2, FGFR3 and FGFR4. Tyrosine phosphorylated by activated FLT1 and KDR. Tyrosine phosphorylated by activated PDGFRB. The receptor-mediated activation of PLCG1 involves its phosphorylation by tyrosine kinases, in response to ligation of a variety of growth factor receptors and immune system receptors. For instance, SYK phosphorylates and activates PLCG1 in response to ligation of the B-cell receptor. May be dephosphorylated by PTPRJ. Phosphorylated by ITK and TXK on Tyr-783 upon TCR activation in T-cells. Post-translationally, ubiquitinated by CBLB in activated T-cells.

The protein localises to the cell projection. It localises to the lamellipodium. It is found in the ruffle. The enzyme catalyses a 1,2-diacyl-sn-glycero-3-phospho-(1D-myo-inositol-4,5-bisphosphate) + H2O = 1D-myo-inositol 1,4,5-trisphosphate + a 1,2-diacyl-sn-glycerol + H(+). It carries out the reaction a 1,2-diacyl-sn-glycero-3-phospho-(1D-myo-inositol) + H2O = 1D-myo-inositol 1-phosphate + a 1,2-diacyl-sn-glycerol + H(+). With respect to regulation, activated by phosphorylation on tyrosine residues. Its function is as follows. Mediates the production of the second messenger molecules diacylglycerol (DAG) and inositol 1,4,5-trisphosphate (IP3). Plays an important role in the regulation of intracellular signaling cascades. Becomes activated in response to ligand-mediated activation of receptor-type tyrosine kinases, such as PDGFRA, PDGFRB, EGFR, FGFR1, FGFR2, FGFR3 and FGFR4. Plays a role in actin reorganization and cell migration. Guanine nucleotide exchange factor that binds the GTPase DNM1 and catalyzes the dissociation of GDP, allowing a GTP molecule to bind in its place, therefore enhancing DNM1-dependent endocytosis. In Homo sapiens (Human), this protein is 1-phosphatidylinositol 4,5-bisphosphate phosphodiesterase gamma-1.